A 397-amino-acid polypeptide reads, in one-letter code: UPF0761 membrane protein Kkor_1635 (397 aa).

6 helical membrane-spanning segments follow: residues 36–56 (MLAL…FPSF), 92–112 (NLSA…MRSI), 132–152 (ILAY…SLAA), 168–188 (ILTF…LYMV), 201–221 (IAAV…AIFV), and 237–257 (IPIF…GVIV).

It belongs to the UPF0761 family.

The protein resides in the cell inner membrane. The protein is UPF0761 membrane protein Kkor_1635 of Kangiella koreensis (strain DSM 16069 / JCM 12317 / KCTC 12182 / SW-125).